Reading from the N-terminus, the 602-residue chain is MASAHIEHKLSLLPDLPGSYQMKDINGKIIYVGKAKNLKNRVRSYFKSSHDGKVAAMVSQVADFDFIVTSTDKEAFLLEITLIQKYQPYYNIKLKKGTGYPYIKITHERDPKIEITGTIRKDGGYYFGPYPNVYAAQETMHFIQKVYPLRRCNGYQGRPCLYYHMGQCLGACFRTVPEKEYTDQIERIKRFLNGNVGKAKASLTAKMERAAKNLQFERAAEIRDQLHYIEQTVEKQKIISHDNTTRDLFNFYMDKGWISIQVFFIRQARLMKRESRLFPVVNTAKEEFESFILQFYSRKNNVKPREVLVPAALDNKVLADILEIPVRTPQRGEKRDLMALAAKNSQIKLEDKFRLMELDNRTTIGAMKELMAALNLPMGHVAEAFDHSHIQGADPVSAMVQFVDGQPAKNNYRKYKLDADKTHNGADEAANTREVIRRRYTRLLKERAPLPDLILMDGGEIEMNAAKDVLENELNLDIPVAGMVKNNKHKTAALLFGNADQLINLDPKSQGFYLLERIQDEVHRFAITFHRQLHAKNSLASRLEGIKGVGPKTRLKLLRKFKTINKIKEAPLEDIQELGISKKVAQALKLSLTAEPTPARRV.

Positions 15-92 (DLPGSYQMKD…IQKYQPYYNI (78 aa)) constitute a GIY-YIG domain. Positions 197 to 232 (GKAKASLTAKMERAAKNLQFERAAEIRDQLHYIEQT) constitute a UVR domain.

This sequence belongs to the UvrC family. As to quaternary structure, interacts with UvrB in an incision complex.

The protein resides in the cytoplasm. Functionally, the UvrABC repair system catalyzes the recognition and processing of DNA lesions. UvrC both incises the 5' and 3' sides of the lesion. The N-terminal half is responsible for the 3' incision and the C-terminal half is responsible for the 5' incision. The sequence is that of UvrABC system protein C from Lacticaseibacillus casei (strain BL23) (Lactobacillus casei).